We begin with the raw amino-acid sequence, 735 residues long: Probable ATP-dependent RNA helicase DHR2 (735 aa).

Positions 1–13 are enriched in polar residues; that stretch reads MAANSNSRVASNH. The disordered stretch occupies residues 1–29; that stretch reads MAANSNSRVASNHTSKKQKVRRNIHPFTN. Over residues 14-24 the composition is skewed to basic residues; sequence TSKKQKVRRNI. Positions 91-257 constitute a Helicase ATP-binding domain; that stretch reads MSYIESNPVT…FNNAPILFVE (167 aa). An ATP-binding site is contributed by 104–111; it reads GETGSGKS. The DEAH box signature appears at 203–206; the sequence is DEAH. The 195-residue stretch at 262 to 456 folds into the Helicase C-terminal domain; sequence DVKQYYLKAP…SPVLMLKRYG (195 aa).

It belongs to the DEAD box helicase family. DEAH subfamily. Interacts with NOP19. Interacts with UBP10.

It is found in the nucleus. It localises to the nucleolus. It catalyses the reaction ATP + H2O = ADP + phosphate + H(+). Functionally, probable ATP-binding RNA helicase. Required for 18S rRNA synthesis. The sequence is that of Probable ATP-dependent RNA helicase DHR2 (DHR2) from Saccharomyces cerevisiae (strain ATCC 204508 / S288c) (Baker's yeast).